Reading from the N-terminus, the 412-residue chain is Non-specific lipid-transfer protein-like 2 (412 aa).

The Microbody targeting signal motif lies at 410–412 (SKI).

This sequence belongs to the thiolase-like superfamily. Thiolase family. As to expression, expressed in intestine, hypodermis and body-wall muscle.

It localises to the peroxisome. It catalyses the reaction choloyl-CoA + propanoyl-CoA = 3alpha,7alpha,12alpha-trihydroxy-24-oxo-5beta-cholestan-26-oyl-CoA + CoA. Inhibited by acetyl-CoA. Catalyzes the thiolytic cleavage of 3-ketoacyl-CoA with 8-16 carbon residues in the acyl group using a ping-pong mechanism whereby binding to 3-ketooctanoyl-CoA results in the release of acetyl-CoA and the subsequent addition of CoA produces 3-ketohexanohyl-CoA. Involved in the biosynthesis of the dauer pheromone by providing short chains of fatty acid that are attached to the ascarylose sugars of the pheromone. The polypeptide is Non-specific lipid-transfer protein-like 2 (Caenorhabditis elegans).